The primary structure comprises 200 residues: Recombination protein RecR (200 aa).

The C4-type zinc finger occupies 59–74; it reads CSTCGNIDSQNPCTVC. One can recognise a Toprim domain in the interval 82-177; sequence SIIVVVADVA…KVTRLAHGVP (96 aa).

Belongs to the RecR family.

Functionally, may play a role in DNA repair. It seems to be involved in an RecBC-independent recombinational process of DNA repair. It may act with RecF and RecO. The protein is Recombination protein RecR of Rhodopseudomonas palustris (strain ATCC BAA-98 / CGA009).